A 393-amino-acid polypeptide reads, in one-letter code: Methylthioribose kinase (393 aa).

ATP contacts are provided by residues asparagine 38, lysine 53, and glutamate 107–leucine 109. A substrate-binding site is contributed by aspartate 225. Residue aspartate 242–glutamate 244 coordinates ATP. Arginine 332 serves as a coordination point for substrate.

It belongs to the methylthioribose kinase family. As to quaternary structure, homodimer.

The catalysed reaction is 5-(methylsulfanyl)-D-ribose + ATP = 5-(methylsulfanyl)-alpha-D-ribose 1-phosphate + ADP + H(+). It functions in the pathway amino-acid biosynthesis; L-methionine biosynthesis via salvage pathway; S-methyl-5-thio-alpha-D-ribose 1-phosphate from S-methyl-5'-thioadenosine (hydrolase route): step 2/2. Its function is as follows. Catalyzes the phosphorylation of methylthioribose into methylthioribose-1-phosphate. This chain is Methylthioribose kinase, found in Bacillus cereus (strain 03BB102).